Reading from the N-terminus, the 632-residue chain is ATP-dependent zinc metalloprotease FtsH (632 aa).

Residues 1–9 (MKPTNEPKK) are Cytoplasmic-facing. The helical transmembrane segment at 10 to 30 (PFFQSPIVLAVLGGILLIFFL) threads the bilayer. Over 31–116 (RSFNSDGSFS…INYSGFSESN (86 aa)) the chain is Periplasmic. The helical transmembrane segment at 117–137 (FFTDMLGWLMPILVILGLWMF) threads the bilayer. Residues 138-632 (MANRMQKNMG…RLIPLEEQAS (495 aa)) are Cytoplasmic-facing. Residue 210–217 (GPPGTGKT) coordinates ATP. H434 contributes to the Zn(2+) binding site. Residue E435 is part of the active site. The Zn(2+) site is built by H438 and D511.

It in the central section; belongs to the AAA ATPase family. In the C-terminal section; belongs to the peptidase M41 family. As to quaternary structure, homohexamer. Zn(2+) is required as a cofactor.

The protein resides in the cell inner membrane. Its function is as follows. Acts as a processive, ATP-dependent zinc metallopeptidase for both cytoplasmic and membrane proteins. Plays a role in the quality control of integral membrane proteins. This is ATP-dependent zinc metalloprotease FtsH from Helicobacter pylori (strain J99 / ATCC 700824) (Campylobacter pylori J99).